Reading from the N-terminus, the 49-residue chain is Large ribosomal subunit protein bL33 (49 aa).

A disordered region spans residues 18-49 (ITTKNKRNNPERLELKKYSPRLKRTTLHRETK). The segment covering 25–34 (NNPERLELKK) has biased composition (basic and acidic residues).

The protein belongs to the bacterial ribosomal protein bL33 family.

The protein is Large ribosomal subunit protein bL33 of Lysinibacillus sphaericus (strain C3-41).